The sequence spans 113 residues: Ig heavy chain V-III region A4 (113 aa).

The Ig-like domain maps to 1–113 (EVKLEESGGG…YWGQGTLVTV (113 aa)). A disulfide bridge links cysteine 22 with cysteine 98.

This is Ig heavy chain V-III region A4 from Mus musculus (Mouse).